The sequence spans 59 residues: uncharacterized protein (59 aa).

This is an uncharacterized protein from Archaeoglobus fulgidus (strain ATCC 49558 / DSM 4304 / JCM 9628 / NBRC 100126 / VC-16).